Here is a 205-residue protein sequence, read N- to C-terminus: Large ribosomal subunit protein uL4 (205 aa).

Residues 43–77 (RRRSGTASTKGRSDVAGSRAKLFRQKGTGRARRGD) are disordered. A compositionally biased stretch (basic residues) spans 63-73 (KLFRQKGTGRA).

The protein belongs to the universal ribosomal protein uL4 family. In terms of assembly, part of the 50S ribosomal subunit.

One of the primary rRNA binding proteins, this protein initially binds near the 5'-end of the 23S rRNA. It is important during the early stages of 50S assembly. It makes multiple contacts with different domains of the 23S rRNA in the assembled 50S subunit and ribosome. Its function is as follows. Forms part of the polypeptide exit tunnel. The protein is Large ribosomal subunit protein uL4 of Desulfosudis oleivorans (strain DSM 6200 / JCM 39069 / Hxd3) (Desulfococcus oleovorans).